Reading from the N-terminus, the 888-residue chain is Inactive deaminase YJL070C (888 aa).

Residues 1–42 (MQAVERRPSLLFDEYQNSVTKPNETKNKEARVLSENDGDVSP) form a disordered region. Ser9 is subject to Phosphoserine. Residues 23–34 (NETKNKEARVLS) show a composition bias toward basic and acidic residues. Residues Ser41, Ser178, and Ser180 each carry the phosphoserine modification.

This sequence belongs to the metallo-dependent hydrolases superfamily. Adenosine and AMP deaminases family.

The polypeptide is Inactive deaminase YJL070C (Saccharomyces cerevisiae (strain ATCC 204508 / S288c) (Baker's yeast)).